We begin with the raw amino-acid sequence, 195 residues long: Protein GrpE (195 aa).

The span at 1–20 shows a compositional bias: basic and acidic residues; sequence MSSKEQKTPDEQVLDQKEAA. Residues 1-40 form a disordered region; sequence MSSKEQKTPDEQVLDQKEAAKGQQADAAPETADVADPRDA.

This sequence belongs to the GrpE family. In terms of assembly, homodimer.

The protein localises to the cytoplasm. Its function is as follows. Participates actively in the response to hyperosmotic and heat shock by preventing the aggregation of stress-denatured proteins, in association with DnaK and GrpE. It is the nucleotide exchange factor for DnaK and may function as a thermosensor. Unfolded proteins bind initially to DnaJ; upon interaction with the DnaJ-bound protein, DnaK hydrolyzes its bound ATP, resulting in the formation of a stable complex. GrpE releases ADP from DnaK; ATP binding to DnaK triggers the release of the substrate protein, thus completing the reaction cycle. Several rounds of ATP-dependent interactions between DnaJ, DnaK and GrpE are required for fully efficient folding. The polypeptide is Protein GrpE (Pectobacterium carotovorum subsp. carotovorum (strain PC1)).